A 294-amino-acid chain; its full sequence is Phosphoprotein (294 aa).

A binding to monomeric RNA-free nucleoprotein region spans residues 12–28; it reads MGNEAAKAAEAFQRSLK. The segment at 52–97 is disordered; the sequence is KPTISKSTKVTTPPERRNAWGEKPDTTRNQTEEARNEATLEDTSRL. Over residues 65 to 97 the composition is skewed to basic and acidic residues; that stretch reads PERRNAWGEKPDTTRNQTEEARNEATLEDTSRL. At serine 106 the chain carries Phosphoserine. The binding to host phosphatase PP1 stretch occupies residues 123-128; sequence KKKVTF. The binding to protein M2-1 stretch occupies residues 135 to 157; that stretch reads RYTKLEMEALELLSDNEDDDAES. Residues serine 148, serine 157, serine 158, serine 168, and serine 171 each carry the phosphoserine modification. Residues 169–194 are oligomerization and binding to RNA-directed RNA polymerase L; that stretch reads ALSLEARLESIDEKLSMILGLLRTLN. The interval 234-294 is disordered; the sequence is MKEEAKQKSK…PDDDLYSLTM (61 aa). Residues 251–279 form a binding to RNA-directed RNA polymerase L region; sequence LTEKAKELNKIVEDESTSGESEEEEEEED. Residues 253–263 show a composition bias toward basic and acidic residues; that stretch reads EKAKELNKIVE. A compositionally biased stretch (acidic residues) spans 264 to 294; that stretch reads DESTSGESEEEEEEEDEEESNPDDDLYSLTM. The binding to the N-RNA complex stretch occupies residues 281 to 294; sequence EESNPDDDLYSLTM.

The protein belongs to the pneumoviridae phosphoprotein P family. In terms of assembly, homotetramer. Interacts with protein M2-1; the interaction between the two tetramers is required for the anti-termination and elongation transcriptional activities of protein M2-1. Interacts with host phosphatase PP1; this interaction recruits PP1 to the inclusion bodies. Formation of a complex PP1/M2-1/P allows P to target host PP1 phosphatase to the M2-1 substrate. Interacts with the nucleoprotein N; the phosphorylated phosphoprotein P binds to N-RNA complex. Interacts with the monomeric RNA-free nucleoprotein N. Interacts with RNA-directed RNA polymerase L (via N-terminus); the association of P and L forms the polymerase complex. In terms of processing, constitutively phosphorylated by host.

It localises to the virion. Its subcellular location is the host cytoplasm. In terms of biological role, plays critical roles in regulating RNA replication and transcription through its interactions with multiple proteins. Tethers the RNA-directed RNA polymerase L to the nucleoprotein-RNA complex. Recruits the M2-1 protein, a processivity factor that is required for efficient transcription of viral RNA. Acts as a chaperone for neo-synthesized nucleoprotein by forming an N-P complex that preserves N in a monomeric and RNA-free state and prevents the association of nascent N with host cell RNAs. Recruits the host phosphatase PP1 to inclusion bodies to regulate viral transcription. This chain is Phosphoprotein, found in Avian metapneumovirus (isolate Canada goose/Minnesota/15a/2001) (AMPV).